We begin with the raw amino-acid sequence, 165 residues long: Putative tyrosine-protein phosphatase AMV078 (165 aa).

The Tyrosine-protein phosphatase domain maps to 2-149 (NISNINNDIY…LKFYNSYKNI (148 aa)). The active-site Phosphocysteine intermediate is the C94.

This sequence belongs to the protein-tyrosine phosphatase family. Non-receptor class dual specificity subfamily.

The enzyme catalyses O-phospho-L-tyrosyl-[protein] + H2O = L-tyrosyl-[protein] + phosphate. This Amsacta moorei entomopoxvirus (AmEPV) protein is Putative tyrosine-protein phosphatase AMV078.